The primary structure comprises 360 residues: DNA replication and repair protein RecF (360 aa).

33–40 (GENGSGKT) is a binding site for ATP.

The protein belongs to the RecF family.

It is found in the cytoplasm. In terms of biological role, the RecF protein is involved in DNA metabolism; it is required for DNA replication and normal SOS inducibility. RecF binds preferentially to single-stranded, linear DNA. It also seems to bind ATP. This is DNA replication and repair protein RecF from Rickettsia massiliae (strain Mtu5).